A 122-amino-acid polypeptide reads, in one-letter code: Large ribosomal subunit protein bL12 (122 aa).

It belongs to the bacterial ribosomal protein bL12 family. Homodimer. Part of the ribosomal stalk of the 50S ribosomal subunit. Forms a multimeric L10(L12)X complex, where L10 forms an elongated spine to which 2 to 4 L12 dimers bind in a sequential fashion. Binds GTP-bound translation factors.

Forms part of the ribosomal stalk which helps the ribosome interact with GTP-bound translation factors. Is thus essential for accurate translation. The sequence is that of Large ribosomal subunit protein bL12 from Yersinia pseudotuberculosis serotype O:1b (strain IP 31758).